The following is a 215-amino-acid chain: Dual specificity phosphatase 29 (215 aa).

Residues 53–201 (HVNEVWPRLH…LRELDKQLVK (149 aa)) enclose the Tyrosine-protein phosphatase domain. 145-152 (HCAMGRSR) serves as a coordination point for substrate. Catalysis depends on C146, which acts as the Phosphocysteine intermediate.

This sequence belongs to the protein-tyrosine phosphatase family. Non-receptor class dual specificity subfamily. In terms of assembly, homodimer. Interacts with PRKAA2. As to expression, skeletal muscle, liver and adipose tissue.

It localises to the cytoplasm. The protein resides in the nucleus. The catalysed reaction is O-phospho-L-tyrosyl-[protein] + H2O = L-tyrosyl-[protein] + phosphate. The enzyme catalyses O-phospho-L-seryl-[protein] + H2O = L-seryl-[protein] + phosphate. It carries out the reaction O-phospho-L-threonyl-[protein] + H2O = L-threonyl-[protein] + phosphate. Functionally, dual specificity phosphatase able to dephosphorylate phosphotyrosine, phosphoserine and phosphothreonine residues within the same substrate, with a preference for phosphotyrosine as a substrate. Involved in the modulation of intracellular signaling cascades. In skeletal muscle regulates systemic glucose homeostasis by activating, AMPK, an energy sensor protein kinase. Affects MAP kinase signaling though modulation of the MAPK1/2 cascade in skeletal muscle promoting muscle cell differentiation, development and atrophy. This Mus musculus (Mouse) protein is Dual specificity phosphatase 29.